The following is a 109-amino-acid chain: Resistin (109 aa).

The N-terminal stretch at 1 to 18 is a signal peptide; that stretch reads MKALSFLFIPVLGLLVCG. Cystine bridges form between C51/C104, C63/C103, C72/C89, C74/C91, and C78/C93.

It belongs to the resistin/FIZZ family. Homodimer; disulfide-linked.

Its subcellular location is the secreted. Hormone that seems to suppress insulin ability to stimulate glucose uptake into adipose cells. Potentially links obesity to diabetes. This Bos taurus (Bovine) protein is Resistin (RETN).